The chain runs to 257 residues: Imidazole glycerol phosphate synthase subunit HisF (257 aa).

Residues Asp-12 and Asp-131 contribute to the active site.

Belongs to the HisA/HisF family. As to quaternary structure, heterodimer of HisH and HisF.

Its subcellular location is the cytoplasm. It carries out the reaction 5-[(5-phospho-1-deoxy-D-ribulos-1-ylimino)methylamino]-1-(5-phospho-beta-D-ribosyl)imidazole-4-carboxamide + L-glutamine = D-erythro-1-(imidazol-4-yl)glycerol 3-phosphate + 5-amino-1-(5-phospho-beta-D-ribosyl)imidazole-4-carboxamide + L-glutamate + H(+). The protein operates within amino-acid biosynthesis; L-histidine biosynthesis; L-histidine from 5-phospho-alpha-D-ribose 1-diphosphate: step 5/9. IGPS catalyzes the conversion of PRFAR and glutamine to IGP, AICAR and glutamate. The HisF subunit catalyzes the cyclization activity that produces IGP and AICAR from PRFAR using the ammonia provided by the HisH subunit. The polypeptide is Imidazole glycerol phosphate synthase subunit HisF (Saccharophagus degradans (strain 2-40 / ATCC 43961 / DSM 17024)).